A 493-amino-acid chain; its full sequence is Glutamyl-tRNA(Gln) amidotransferase subunit A (493 aa).

Active-site charge relay system residues include Lys-79 and Ser-159. Catalysis depends on Ser-183, which acts as the Acyl-ester intermediate.

This sequence belongs to the amidase family. GatA subfamily. As to quaternary structure, heterotrimer of A, B and C subunits.

The enzyme catalyses L-glutamyl-tRNA(Gln) + L-glutamine + ATP + H2O = L-glutaminyl-tRNA(Gln) + L-glutamate + ADP + phosphate + H(+). Functionally, allows the formation of correctly charged Gln-tRNA(Gln) through the transamidation of misacylated Glu-tRNA(Gln) in organisms which lack glutaminyl-tRNA synthetase. The reaction takes place in the presence of glutamine and ATP through an activated gamma-phospho-Glu-tRNA(Gln). This Brucella ovis (strain ATCC 25840 / 63/290 / NCTC 10512) protein is Glutamyl-tRNA(Gln) amidotransferase subunit A.